A 657-amino-acid polypeptide reads, in one-letter code: Glycogen debranching enzyme (657 aa).

Asp-336 (nucleophile) is an active-site residue. The Proton donor role is filled by Glu-371. A compositionally biased stretch (basic and acidic residues) spans 458–467; the sequence is NEANGEENRD. Residues 458-479 are disordered; the sequence is NEANGEENRDGTNNNYSNNHGK.

It belongs to the glycosyl hydrolase 13 family.

It carries out the reaction Hydrolysis of (1-&gt;6)-alpha-D-glucosidic linkages to branches with degrees of polymerization of three or four glucose residues in limit dextrin.. The protein operates within glycan degradation; glycogen degradation. In terms of biological role, removes maltotriose and maltotetraose chains that are attached by 1,6-alpha-linkage to the limit dextrin main chain, generating a debranched limit dextrin. This is Glycogen debranching enzyme from Escherichia coli O8 (strain IAI1).